Reading from the N-terminus, the 162-residue chain is Ecotin (162 aa).

The first 18 residues, 1–18 (MFVPAVVFAALASTSAWA), serve as a signal peptide directing secretion. Cys-70 and Cys-107 are joined by a disulfide.

Belongs to the protease inhibitor I11 (ecotin) family. In terms of assembly, homodimer.

Its subcellular location is the periplasm. Its function is as follows. General inhibitor of pancreatic serine proteases: inhibits chymotrypsin, trypsin, elastases, factor X, kallikrein as well as a variety of other proteases. The chain is Ecotin from Salmonella choleraesuis (strain SC-B67).